A 2267-amino-acid polypeptide reads, in one-letter code: Acetyl-CoA carboxylase 1 (2267 aa).

Residues 38–544 enclose the Biotin carboxylation domain; the sequence is PIHSVLVANN…HTGWLDSRIA (507 aa). An ATP-grasp domain is found at 190 to 384; sequence PESCNSIPEE…AAQVVVGMGV (195 aa). 216–273 provides a ligand contact to ATP; sequence CQVVGYPAMIKASWGGGGKGIRKVHNDDEVRALFKQVQGEVPGSPIFIMKVASQSRHL. Residues glutamate 339, glutamate 353, and asparagine 355 each coordinate Mg(2+). Mn(2+) contacts are provided by glutamate 339, glutamate 353, and asparagine 355. Arginine 357 is an active-site residue. The region spanning 671 to 745 is the Biotinyl-binding domain; it reads LQKEHDPSKL…QAADLIARLD (75 aa). Lysine 712 bears the N6-biotinyllysine mark. The 342-residue stretch at 1502-1843 folds into the CoA carboxyltransferase N-terminal domain; the sequence is PYKPLDAIDL…YVGGPLPIMK (342 aa). The tract at residues 1502 to 2163 is carboxyltransferase; the sequence is PYKPLDAIDL…EDALAKEIRE (662 aa). The CoA site is built by arginine 1752, lysine 2053, and arginine 2055. In terms of domain architecture, CoA carboxyltransferase C-terminal spans 1847 to 2163; sequence PPDRPVTYFP…EDALAKEIRE (317 aa).

As to quaternary structure, homodimer. Requires Mg(2+) as cofactor. It depends on Mn(2+) as a cofactor. Biotin is required as a cofactor.

It localises to the cytoplasm. Its subcellular location is the cytosol. The enzyme catalyses hydrogencarbonate + acetyl-CoA + ATP = malonyl-CoA + ADP + phosphate + H(+). It catalyses the reaction N(6)-biotinyl-L-lysyl-[protein] + hydrogencarbonate + ATP = N(6)-carboxybiotinyl-L-lysyl-[protein] + ADP + phosphate + H(+). It participates in lipid metabolism; malonyl-CoA biosynthesis; malonyl-CoA from acetyl-CoA: step 1/1. Functionally, multifunctional enzyme that catalyzes the carboxylation of acetyl-CoA, forming malonyl-CoA, which is used in the plastid for fatty acid synthesis and in the cytosol in various biosynthetic pathways including fatty acid elongation. In Oryza sativa subsp. japonica (Rice), this protein is Acetyl-CoA carboxylase 1 (ACC1).